The sequence spans 197 residues: Pyridoxal 5'-phosphate synthase subunit PdxT (197 aa).

Residue 52 to 54 (GES) participates in L-glutamine binding. Cysteine 84 functions as the Nucleophile in the catalytic mechanism. L-glutamine contacts are provided by residues arginine 111 and 139 to 140 (IR). Active-site charge relay system residues include histidine 175 and glutamate 177.

Belongs to the glutaminase PdxT/SNO family. In the presence of PdxS, forms a dodecamer of heterodimers. Only shows activity in the heterodimer.

The enzyme catalyses aldehydo-D-ribose 5-phosphate + D-glyceraldehyde 3-phosphate + L-glutamine = pyridoxal 5'-phosphate + L-glutamate + phosphate + 3 H2O + H(+). The catalysed reaction is L-glutamine + H2O = L-glutamate + NH4(+). It participates in cofactor biosynthesis; pyridoxal 5'-phosphate biosynthesis. In terms of biological role, catalyzes the hydrolysis of glutamine to glutamate and ammonia as part of the biosynthesis of pyridoxal 5'-phosphate. The resulting ammonia molecule is channeled to the active site of PdxS. In Halorubrum lacusprofundi (strain ATCC 49239 / DSM 5036 / JCM 8891 / ACAM 34), this protein is Pyridoxal 5'-phosphate synthase subunit PdxT.